Consider the following 97-residue polypeptide: Putative defensin-like protein 227 (97 aa).

The first 26 residues, 1-26, serve as a signal peptide directing secretion; it reads MKWATLFMVSCVLMFFVMNNINEVES. 4 disulfide bridges follow: Cys35–Cys97, Cys45–Cys76, Cys53–Cys91, and Cys74–Cys93.

This sequence belongs to the DEFL family.

The protein resides in the secreted. This Arabidopsis thaliana (Mouse-ear cress) protein is Putative defensin-like protein 227 (SCRL28).